Consider the following 167-residue polypeptide: HTH-type transcriptional repressor YetL (167 aa).

Residues Ser26–Glu160 form the HTH marR-type domain. Positions Pro74–Arg97 form a DNA-binding region, H-T-H motif.

Homodimer. The N- and C-terminal helices from both subunits stabilize YetL dimer via extensive intersubunit interactions.

Its activity is regulated as follows. Binding to the yetM cis sequence is clearly inhibited by kaempferol, morin, apigenin and luteolin, slightly inhibited by quercetin and galangin, but no inhibition is observed with the other flavonoids. Flavonoid binding may induce conformational changes and modulate interaction with DNA. Its function is as follows. Negatively regulates yetM expression and its own expression. Binds specifically to corresponding single sites in the divergent yetL and yetM promoter regions, with higher affinity to the yetM region. Recognizes a 28-mer operator of double-stranded DNA that contains a palindromic sequence. In Bacillus subtilis (strain 168), this protein is HTH-type transcriptional repressor YetL (yetL).